We begin with the raw amino-acid sequence, 1503 residues long: Protein Skeletor, isoforms D/E (1503 aa).

The first 28 residues, 1–28 (MLAMKDKPWLLLFGLLAALSCLASFGDA), serve as a signal peptide directing secretion. 2 DM13 domains span residues 34 to 143 (GTKI…VSIP) and 151 to 258 (PQKI…VRLP). The 133-residue stretch at 287–419 (LAFEVRWAVA…GAESVVWAIG (133 aa)) folds into the DOMON domain. Disordered stretches follow at residues 451–491 (PLPE…NVEP), 830–857 (NPNLNPNHPNQNPIPNPHQKPNVTPTEI), 1086–1106 (IFNQPGGKGKGDQKPKASSVS), and 1426–1503 (EFRG…GRRA). The span at 830 to 840 (NPNLNPNHPNQ) shows a compositional bias: low complexity. Low complexity predominate over residues 1452 to 1491 (SSSSGSTIYPYSSSTGASTSTVSSSASSPLSSSSLRPIST).

As to quaternary structure, interacts with Chro and Mgtor as part of a macromolecular complex forming the spindle matrix. Chro colocalizes with Skeletor (Skel) on the chromosomes at interphase and on spindle during metaphase.

Its subcellular location is the cytoplasm. The protein localises to the cytoskeleton. It is found in the spindle. The protein resides in the nucleus. It localises to the nucleolus. Its subcellular location is the chromosome. Its function is as follows. Provides structural support to stabilize and organize the microtubule spindle during mitosis (within embryonic somatic cells) and meiosis (within spermatocytes). The role in mitosis regulation depends on the Ran pathway. This chain is Protein Skeletor, isoforms D/E, found in Drosophila melanogaster (Fruit fly).